Reading from the N-terminus, the 298-residue chain is Acetylglutamate kinase (298 aa).

Residues Gly-69–Gly-70, Arg-91, and Asn-196 contribute to the substrate site.

Belongs to the acetylglutamate kinase family. ArgB subfamily.

It localises to the cytoplasm. It carries out the reaction N-acetyl-L-glutamate + ATP = N-acetyl-L-glutamyl 5-phosphate + ADP. It functions in the pathway amino-acid biosynthesis; L-arginine biosynthesis; N(2)-acetyl-L-ornithine from L-glutamate: step 2/4. Its function is as follows. Catalyzes the ATP-dependent phosphorylation of N-acetyl-L-glutamate. This Rhodopseudomonas palustris (strain TIE-1) protein is Acetylglutamate kinase.